The sequence spans 70 residues: MAIEKSIASSSIAEVIDRVLDKGVVIDAFVRVALVGIELIAIEARVVIASVETWLKYAEAIGLTAQPSAA.

This sequence belongs to the gas vesicle GvpA family. In terms of assembly, the gas vesicle shell is 2 nm thick and consists of a single layer of this protein. It forms helical ribs nearly perpendicular to the long axis of the vesicle.

It localises to the gas vesicle shell. Its function is as follows. Gas vesicles are hollow, gas filled proteinaceous nanostructures found in some microorganisms. During planktonic growth they allow positioning of the organism at a favorable depth for light or nutrient acquisition. GvpA forms the protein shell. The chain is Gas vesicle protein A from Bradyrhizobium sp. (strain ORS 278).